Here is a 367-residue protein sequence, read N- to C-terminus: MATILTLAGDGIGPEIMTQAIDVLNAVNNKFALGLTLESGLIGGVAVDATGEPLPEETLQRARAADAVLLGAVGGPKWDGIERSKRPERGLLKIRSELGLFANLRVAKLYPQLVNASSIKPEIISGLDLLIVRELTGGIYFGEPRGIRTLENGEQQGYNTMVYSTSEINRIGKVAFELAQTRAQAAGTPAKVCSIDKANVLEVTELWKQTMIELQQAEYSDVALSHMYADNACMQLIKDPKQFDVMVTGNLFGDILSDEAAMLTGSIGMLPSASLDEAGKGMYEPCHGSAPDIAGQDIANPLATILSVAMMLRYTFKQEVAAQAIEQAVSDVLDDGLRTVDILDRNEAGLIQVGCQQMGQAVLAKLL.

75–88 (GPKWDGIERSKRPE) is an NAD(+) binding site. Substrate-binding residues include arginine 95, arginine 105, arginine 133, and aspartate 230. Mg(2+) contacts are provided by aspartate 230, aspartate 254, and aspartate 258. Position 288-300 (288-300 (GSAPDIAGQDIAN)) interacts with NAD(+).

Belongs to the isocitrate and isopropylmalate dehydrogenases family. LeuB type 1 subfamily. Homodimer. It depends on Mg(2+) as a cofactor. Mn(2+) is required as a cofactor.

The protein resides in the cytoplasm. It carries out the reaction (2R,3S)-3-isopropylmalate + NAD(+) = 4-methyl-2-oxopentanoate + CO2 + NADH. It functions in the pathway amino-acid biosynthesis; L-leucine biosynthesis; L-leucine from 3-methyl-2-oxobutanoate: step 3/4. Catalyzes the oxidation of 3-carboxy-2-hydroxy-4-methylpentanoate (3-isopropylmalate) to 3-carboxy-4-methyl-2-oxopentanoate. The product decarboxylates to 4-methyl-2 oxopentanoate. The chain is 3-isopropylmalate dehydrogenase from Psychrobacter arcticus (strain DSM 17307 / VKM B-2377 / 273-4).